A 233-amino-acid chain; its full sequence is Small ribosomal subunit protein uS3 (233 aa).

Residues 39–107 (VREFLKAKLK…PVHVNIEEVR (69 aa)) enclose the KH type-2 domain. Residues 209-233 (PGQVSAEPTQPEKKMRKGGRNAAAN) form a disordered region.

The protein belongs to the universal ribosomal protein uS3 family. In terms of assembly, part of the 30S ribosomal subunit. Forms a tight complex with proteins S10 and S14.

In terms of biological role, binds the lower part of the 30S subunit head. Binds mRNA in the 70S ribosome, positioning it for translation. This Laribacter hongkongensis (strain HLHK9) protein is Small ribosomal subunit protein uS3.